The primary structure comprises 111 residues: Fluoride-specific ion channel FluC (111 aa).

The next 3 membrane-spanning stretches (helical) occupy residues 2–22 (GLLL…RFAL), 36–56 (GILL…AFLI), and 71–91 (FLLV…SLDI). Residues glycine 79 and threonine 82 each coordinate Na(+).

This sequence belongs to the fluoride channel Fluc/FEX (TC 1.A.43) family.

The protein localises to the cell inner membrane. It catalyses the reaction fluoride(in) = fluoride(out). With respect to regulation, na(+) is not transported, but it plays an essential structural role and its presence is essential for fluoride channel function. Its function is as follows. Fluoride-specific ion channel. Important for reducing fluoride concentration in the cell, thus reducing its toxicity. The polypeptide is Fluoride-specific ion channel FluC (Francisella tularensis subsp. holarctica (strain FTNF002-00 / FTA)).